Consider the following 167-residue polypeptide: Ribosome maturation factor RimM (167 aa).

Positions 94–165 (ENEFYYSDII…KIIITPMEGL (72 aa)) constitute a PRC barrel domain.

This sequence belongs to the RimM family. In terms of assembly, binds ribosomal protein uS19.

It localises to the cytoplasm. In terms of biological role, an accessory protein needed during the final step in the assembly of 30S ribosomal subunit, possibly for assembly of the head region. Essential for efficient processing of 16S rRNA. May be needed both before and after RbfA during the maturation of 16S rRNA. It has affinity for free ribosomal 30S subunits but not for 70S ribosomes. This Staphylococcus aureus (strain MRSA252) protein is Ribosome maturation factor RimM.